Reading from the N-terminus, the 285-residue chain is Kanamycin B dioxygenase (285 aa).

It belongs to the PhyH family. Requires Fe cation as cofactor.

The enzyme catalyses kanamycin B + 2-oxoglutarate + O2 = 2'-dehydrokanamycin A + succinate + NH4(+) + CO2. It participates in antibiotic biosynthesis; kanamycin biosynthesis. Mediates the conversion of kanamycin B into 2'-dehydrokanamycin A during the transformation of kanamycin B to kanamycin A. This Streptomyces kanamyceticus protein is Kanamycin B dioxygenase (kanJ).